The following is a 501-amino-acid chain: Suppressor of hairless protein homolog (501 aa).

3 DNA-binding regions span residues 58–68, 166–171, and 193–198; these read QKSYGNEKRFF, SKPSKK, and RLRSQT. The IPT/TIG domain maps to 356–446; sequence PVVESLQLNG…YSTSLTFTYT (91 aa).

This sequence belongs to the Su(H) family. As to quaternary structure, interacts with activated Notch proteins. Forms a ternary complex with nrarp and the intracellular domain (NICD) of notch1. Interacts with rita1, leading to nuclear export, prevent the interaction between rbpj and NICD product and subsequent down-regulation of the Notch signaling pathway.

The protein resides in the nucleus. The protein localises to the cytoplasm. Functionally, transcriptional regulator that plays a central role in Notch signaling, a signaling pathway involved in cell-cell communication that regulates a broad spectrum of cell-fate determinations. Acts as a transcriptional repressor when it is not associated with Notch proteins. When associated with some NICD product of Notch proteins (Notch intracellular domain), it acts as a transcriptional activator that activates transcription of Notch target genes. Required for the transcriptional activation of ESR1, suggesting that it is required during primary neurogenesis in embryos. Binds to the oxygen responsive element of COX4I2 and activates its transcription under hypoxia conditions (4% oxygen). This Xenopus laevis (African clawed frog) protein is Suppressor of hairless protein homolog (rbpj).